The following is a 127-amino-acid chain: Fluoride-specific ion channel FluC (127 aa).

4 consecutive transmembrane segments (helical) span residues 4 to 24, 36 to 56, 68 to 88, and 99 to 119; these read SILA…FLGL, GTLL…AYFA, LIIT…AEVV, and AAGA…LGLF. Na(+)-binding residues include Gly-75 and Thr-78.

It belongs to the fluoride channel Fluc/FEX (TC 1.A.43) family.

The protein localises to the cell inner membrane. The enzyme catalyses fluoride(in) = fluoride(out). Na(+) is not transported, but it plays an essential structural role and its presence is essential for fluoride channel function. In terms of biological role, fluoride-specific ion channel. Important for reducing fluoride concentration in the cell, thus reducing its toxicity. The protein is Fluoride-specific ion channel FluC of Pseudomonas aeruginosa (strain UCBPP-PA14).